Reading from the N-terminus, the 135-residue chain is MLYPKRTKFRKYQKGRCKGCKADGTQLCFGKYGIKSCEAGRISYQAIEAARRAISRKFRRNSKIWVRVFADIPITSKPAEVRMGKGKGNTKGWIARVLKGQILFEMDCVSLSNAQQAATLAAHKLGLSIKFFKWS.

This sequence belongs to the universal ribosomal protein uL16 family.

The protein localises to the mitochondrion. This Marchantia polymorpha (Common liverwort) protein is Large ribosomal subunit protein uL16m (RPL16).